Here is a 191-residue protein sequence, read N- to C-terminus: UPF0398 protein LSEI_1479 (191 aa).

It belongs to the UPF0398 family.

The protein is UPF0398 protein LSEI_1479 of Lacticaseibacillus paracasei (strain ATCC 334 / BCRC 17002 / CCUG 31169 / CIP 107868 / KCTC 3260 / NRRL B-441) (Lactobacillus paracasei).